A 123-amino-acid chain; its full sequence is cAMP-responsive element-binding protein-like 2 (123 aa).

Residues 1–24 (MDDSKVVGGKVKKPGKRGRKPAKI) are disordered. Over residues 10-21 (KVKKPGKRGRKP) the composition is skewed to basic residues. The 64-residue stretch at 23 to 86 (KIDLKAKLER…MAMDQGKIPS (64 aa)) folds into the bZIP domain. The interval 29–60 (KLERSRQSARECRARKKLRYQYLEELVSSRER) is basic motif. Residues 62–69 (ICALREEL) form a leucine-zipper region. A disordered region spans residues 92-123 (LTGEEQSKPQQNSSRHPKAGKTDANTNSLVGN). Positions 114 to 123 (DANTNSLVGN) are enriched in polar residues.

It belongs to the bZIP family. ATF subfamily. As to quaternary structure, interacts with CREB1; regulates CREB1 phosphorylation, stability and transcriptional activity. Phosphorylated by AMPK. Widely expressed with higher expression in adipose tissue, skeletal muscle, and liver (at protein level).

It is found in the nucleus. Functionally, probable regulator of CREB1 transcriptional activity which is involved in adipose cells differentiation. May also play a regulatory role in the cell cycle. The sequence is that of cAMP-responsive element-binding protein-like 2 (Crebl2) from Mus musculus (Mouse).